A 796-amino-acid polypeptide reads, in one-letter code: MTESVELMNKYGEPLRYDRNFTGPRQRDRSCTDVPCLLLFVLFLGGWAFIAQYAIRNGDLNKLLVPTDSFNRKCGMDSGVLNKKNLFFFDLNQCIDPLVPITGCDTPQVCVETCPRETFVWDTMKDKQSFAELHSRLICLSEEHKAQIRTKSDIQDAINQNQCARWYIKSAPFLKRCLFEFSQGVCDYIPSFLLNGGRSRRELHMLPGNATTEVQMQADVMYQKMTDAQALVVPQANGKQTPVDEEPIIQCKRRLNEAVIKEKMMQTDTRLAKLVGNMVAHFYNGTNDAQLLGEKIVEDLVNSWSIVLVACFCTLVASLIYIALMRWLSAPILWFSIFGVLIGLLVGIYFSVKQYIHWENTPTVPVHGLNLHSTVKNVLQNQNTWLYLSIFVGVCFVVILLLVIVLRKRIRIAIALTKEGSKAVSSVISTVFFPIFSWILFIAAIAFAIGVGLYLGSIGDPSFRMVRQLTKSGEVTTEDCVCEGPAINYTVGGSCKPEVFQQYCSVRLTSFFQNRNPCLNTTCSFDSINNPIEIKWAIFYNVFGFLWLSFFISAFSYMVLASTFARWYWTFKKRDVPYFTLTRAFFQTAVYHLGTVAFGSLILAIVRLIRLVLEYIHEKLKKYDNAVTRAILCCMRCFFWLLETFLKFLNRNAYIMCAIHGKNFCSSAADSFNLIMRNFLRVVTLDQVTDFLFFLSKLLLTAGAGASTYYFLDNNPSIIRLNYIAVPTTVVVIAAFLITSVFFGVYSTAVDTLFLCFLEDCERNDGSPEKPFFMSKQLMKILGKKNNLPPRQRRGK.

A glycan (N-linked (GlcNAc...) asparagine) is linked at N20. Residues 35–55 (PCLLLFVLFLGGWAFIAQYAI) form a helical membrane-spanning segment. N209 and N284 each carry an N-linked (GlcNAc...) asparagine glycan. A run of 4 helical transmembrane segments spans residues 304–324 (WSIV…YIAL), 332–352 (ILWF…YFSV), 386–406 (LYLS…VIVL), and 431–451 (VFFP…AIGV). N-linked (GlcNAc...) asparagine glycosylation is found at N488 and N520. Transmembrane regions (helical) follow at residues 542 to 562 (VFGF…VLAS), 585 to 605 (FFQT…ILAI), 626 to 648 (AVTR…FLKF), 691 to 711 (FLFF…TYYF), and 724 to 744 (IAVP…VFFG).

It belongs to the CTL (choline transporter-like) family.

The protein localises to the membrane. In Drosophila melanogaster (Fruit fly), this protein is Choline transporter-like 2.